Consider the following 194-residue polypeptide: Probable proteasome subunit beta type-4 (194 aa).

This sequence belongs to the peptidase T1B family. In terms of assembly, the 26S proteasome consists of a 20S proteasome core and two 19S regulatory subunits. The 20S proteasome core is composed of 28 subunits that are arranged in four stacked rings, resulting in a barrel-shaped structure. The two end rings are each formed by seven alpha subunits, and the two central rings are each formed by seven beta subunits. The catalytic chamber with the active sites is on the inside of the barrel.

The protein resides in the cytoplasm. It is found in the nucleus. Functionally, non-catalytic component of the proteasome, a multicatalytic proteinase complex which is characterized by its ability to cleave peptides with Arg, Phe, Tyr, Leu, and Glu adjacent to the leaving group at neutral or slightly basic pH. The proteasome has an ATP-dependent proteolytic activity. The chain is Probable proteasome subunit beta type-4 (PRO2) from Meyerozyma guilliermondii (strain ATCC 6260 / CBS 566 / DSM 6381 / JCM 1539 / NBRC 10279 / NRRL Y-324) (Yeast).